The chain runs to 741 residues: ABC transporter D family member 2 (741 aa).

A run of 3 helical transmembrane segments spans residues 39-59 (GSLGKKVFILLALGGGAFSLV), 119-139 (FLSLLYLTALLFARTMLSVSI), and 260-280 (VVVMGWGSPLLMFSYFIVSGF). The ABC transmembrane type-1 domain occupies 131–409 (ARTMLSVSIA…LMVALSQAIG (279 aa)). The 223-residue stretch at 518–740 (IKFENVSIVS…DDDHLKKPLS (223 aa)) folds into the ABC transporter domain. 551 to 558 (GPNGSGKS) lines the ATP pocket.

The protein belongs to the ABC transporter superfamily. ABCD family. Peroxisomal fatty acyl CoA transporter (TC 3.A.1.203) subfamily.

The protein resides in the membrane. This is ABC transporter D family member 2 (abcD2) from Dictyostelium discoideum (Social amoeba).